The primary structure comprises 136 residues: Small ribosomal subunit protein uS8 (136 aa).

This sequence belongs to the universal ribosomal protein uS8 family. In terms of assembly, part of the 30S ribosomal subunit. Contacts proteins S5 and S12.

Functionally, one of the primary rRNA binding proteins, it binds directly to 16S rRNA central domain where it helps coordinate assembly of the platform of the 30S subunit. The protein is Small ribosomal subunit protein uS8 of Sulfurihydrogenibium sp. (strain YO3AOP1).